A 142-amino-acid polypeptide reads, in one-letter code: Large ribosomal subunit protein uL11 (142 aa).

This sequence belongs to the universal ribosomal protein uL11 family. As to quaternary structure, part of the ribosomal stalk of the 50S ribosomal subunit. Interacts with L10 and the large rRNA to form the base of the stalk. L10 forms an elongated spine to which L12 dimers bind in a sequential fashion forming a multimeric L10(L12)X complex. One or more lysine residues are methylated.

Functionally, forms part of the ribosomal stalk which helps the ribosome interact with GTP-bound translation factors. The protein is Large ribosomal subunit protein uL11 of Liberibacter asiaticus (Citrus greening disease).